A 293-amino-acid polypeptide reads, in one-letter code: tRNA-cytidine(32) 2-sulfurtransferase (293 aa).

The PP-loop motif signature appears at 62–67 (SGGKDS). 3 residues coordinate [4Fe-4S] cluster: Cys-137, Cys-140, and Cys-228.

Belongs to the TtcA family. Homodimer. Mg(2+) serves as cofactor. Requires [4Fe-4S] cluster as cofactor.

The protein localises to the cytoplasm. The enzyme catalyses cytidine(32) in tRNA + S-sulfanyl-L-cysteinyl-[cysteine desulfurase] + AH2 + ATP = 2-thiocytidine(32) in tRNA + L-cysteinyl-[cysteine desulfurase] + A + AMP + diphosphate + H(+). It functions in the pathway tRNA modification. In terms of biological role, catalyzes the ATP-dependent 2-thiolation of cytidine in position 32 of tRNA, to form 2-thiocytidine (s(2)C32). The sulfur atoms are provided by the cysteine/cysteine desulfurase (IscS) system. The chain is tRNA-cytidine(32) 2-sulfurtransferase from Brucella abortus (strain S19).